The sequence spans 291 residues: Probable 2-(5''-triphosphoribosyl)-3'-dephosphocoenzyme-A synthase (291 aa).

This sequence belongs to the CitG/MdcB family.

The enzyme catalyses 3'-dephospho-CoA + ATP = 2'-(5''-triphospho-alpha-D-ribosyl)-3'-dephospho-CoA + adenine. In terms of biological role, involved in the formation of 2-(5''-phosphoribosyl)-3'-dephosphocoenzyme-A, the prosthetic group of the acyl-carrier protein of the malonate decarboxylase. This Pseudomonas syringae pv. tomato (strain ATCC BAA-871 / DC3000) protein is Probable 2-(5''-triphosphoribosyl)-3'-dephosphocoenzyme-A synthase.